The following is a 445-amino-acid chain: UPF0210 protein STER_0157 (445 aa).

This sequence belongs to the UPF0210 family. As to quaternary structure, homodimer.

This Streptococcus thermophilus (strain ATCC BAA-491 / LMD-9) protein is UPF0210 protein STER_0157.